We begin with the raw amino-acid sequence, 29 residues long: Acidic phospholipase A2 Omo-E6 (29 aa).

Residues Y27 and G29 each contribute to the Ca(2+) site.

Ca(2+) serves as cofactor. Expressed by the venom gland.

Its subcellular location is the secreted. The catalysed reaction is a 1,2-diacyl-sn-glycero-3-phosphocholine + H2O = a 1-acyl-sn-glycero-3-phosphocholine + a fatty acid + H(+). In terms of biological role, snake venom phospholipase A2 (PLA2) that inhibits the ADP- and collagen-induced human platelet aggregation. Exhibits strong hydrolytic activities and prefers the anionic micelles (dPPC with deoxycholate) to the zwitterionic micelles (dPPC with Triton X-100). PLA2 catalyzes the calcium-dependent hydrolysis of the 2-acyl groups in 3-sn-phosphoglycerides. This Ovophis monticola (Chinese mountain pitviper) protein is Acidic phospholipase A2 Omo-E6.